A 238-amino-acid chain; its full sequence is Fmr1 neighbor protein (238 aa).

Residues 1 to 30 (MPSDRRPSQRRNRSKSRDYRGARSKVTRAD) form a disordered region. At 1 to 79 (MPSDRRPSQR…CLQYLWARRH (79 aa)) the chain is on the cytoplasmic side. A compositionally biased stretch (basic and acidic residues) spans 15 to 30 (KSRDYRGARSKVTRAD). The chain crosses the membrane as a helical span at residues 80–100 (LGLLLLLFWTLVILFRPVNTA). Topologically, residues 101–178 (KLPILAEAAE…VRDKPTQVLR (78 aa)) are extracellular. Residues 118–176 (MLDFFFPTACIIRDNQVVVACNNQPYLSESECLKSKCCSSTSGTIIKCYAPVRDKPTQV) form the P-type domain. A helical transmembrane segment spans residues 179–199 (VFGLAAISILVLGFLPMCCCS). Topologically, residues 200-238 (MCWRRKRMNRMLKVLKKQKSKGKKPKGRKASEERALLSH) are cytoplasmic. Residues 214–227 (LKKQKSKGKKPKGR) show a composition bias toward basic residues. The interval 214–238 (LKKQKSKGKKPKGRKASEERALLSH) is disordered. A compositionally biased stretch (basic and acidic residues) spans 228–238 (KASEERALLSH).

It is found in the membrane. This chain is Fmr1 neighbor protein, found in Mus musculus (Mouse).